We begin with the raw amino-acid sequence, 190 residues long: Small ribosomal subunit protein uS5 (190 aa).

Positions 19 to 82 constitute an S5 DRBM domain; that stretch reads IIDKLVTINR…ERAKRSMIRV (64 aa). Residues 161-190 are disordered; the sequence is SVASRRGKKVSDILGRREPVAGQEGEEAHA. Basic and acidic residues predominate over residues 169 to 179; the sequence is KVSDILGRREP.

Belongs to the universal ribosomal protein uS5 family. In terms of assembly, part of the 30S ribosomal subunit. Contacts proteins S4 and S8.

Its function is as follows. With S4 and S12 plays an important role in translational accuracy. Functionally, located at the back of the 30S subunit body where it stabilizes the conformation of the head with respect to the body. This Granulibacter bethesdensis (strain ATCC BAA-1260 / CGDNIH1) protein is Small ribosomal subunit protein uS5.